Here is a 29-residue protein sequence, read N- to C-terminus: Thrombin-like enzyme collinein-2 (29 aa).

Monomer. As to expression, expressed by the venom gland.

It localises to the secreted. Functionally, thrombin-like snake venom serine protease. This is Thrombin-like enzyme collinein-2 from Crotalus durissus collilineatus (Brazilian rattlesnake).